Consider the following 157-residue polypeptide: Transcription antitermination protein NusB (157 aa).

Belongs to the NusB family.

In terms of biological role, involved in transcription antitermination. Required for transcription of ribosomal RNA (rRNA) genes. Binds specifically to the boxA antiterminator sequence of the ribosomal RNA (rrn) operons. This is Transcription antitermination protein NusB from Xylella fastidiosa (strain M12).